The chain runs to 283 residues: Formamidopyrimidine-DNA glycosylase (283 aa).

The active-site Schiff-base intermediate with DNA is proline 2. The Proton donor role is filled by glutamate 3. The active-site Proton donor; for beta-elimination activity is the lysine 60. Positions 95, 114, and 159 each coordinate DNA. The segment at 244–278 (WVYGRHNQPCRVCGTPIERIKLGGRSSHFCPQCQP) adopts an FPG-type zinc-finger fold. The Proton donor; for delta-elimination activity role is filled by arginine 268.

It belongs to the FPG family. As to quaternary structure, monomer. The cofactor is Zn(2+).

It catalyses the reaction Hydrolysis of DNA containing ring-opened 7-methylguanine residues, releasing 2,6-diamino-4-hydroxy-5-(N-methyl)formamidopyrimidine.. The enzyme catalyses 2'-deoxyribonucleotide-(2'-deoxyribose 5'-phosphate)-2'-deoxyribonucleotide-DNA = a 3'-end 2'-deoxyribonucleotide-(2,3-dehydro-2,3-deoxyribose 5'-phosphate)-DNA + a 5'-end 5'-phospho-2'-deoxyribonucleoside-DNA + H(+). Functionally, involved in base excision repair of DNA damaged by oxidation or by mutagenic agents. Acts as a DNA glycosylase that recognizes and removes damaged bases. Has a preference for oxidized purines, such as 7,8-dihydro-8-oxoguanine (8-oxoG). Has AP (apurinic/apyrimidinic) lyase activity and introduces nicks in the DNA strand. Cleaves the DNA backbone by beta-delta elimination to generate a single-strand break at the site of the removed base with both 3'- and 5'-phosphates. This chain is Formamidopyrimidine-DNA glycosylase, found in Crocosphaera subtropica (strain ATCC 51142 / BH68) (Cyanothece sp. (strain ATCC 51142)).